The chain runs to 406 residues: Cysteine desulfurase (406 aa).

The residue at position 226 (lysine 226) is an N6-(pyridoxal phosphate)lysine. Cysteine 364 acts as the Cysteine persulfide intermediate in catalysis.

This sequence belongs to the class-V pyridoxal-phosphate-dependent aminotransferase family. Csd subfamily. As to quaternary structure, homodimer. Interacts with SufE and the SufBCD complex composed of SufB, SufC and SufD. The interaction with SufE is required to mediate the direct transfer of the sulfur atom from the S-sulfanylcysteine. Requires pyridoxal 5'-phosphate as cofactor.

It localises to the cytoplasm. The catalysed reaction is (sulfur carrier)-H + L-cysteine = (sulfur carrier)-SH + L-alanine. The enzyme catalyses L-selenocysteine + AH2 = hydrogenselenide + L-alanine + A + H(+). It participates in cofactor biosynthesis; iron-sulfur cluster biosynthesis. Its function is as follows. Cysteine desulfurases mobilize the sulfur from L-cysteine to yield L-alanine, an essential step in sulfur metabolism for biosynthesis of a variety of sulfur-containing biomolecules. Component of the suf operon, which is activated and required under specific conditions such as oxidative stress and iron limitation. Acts as a potent selenocysteine lyase in vitro, that mobilizes selenium from L-selenocysteine. Selenocysteine lyase activity is however unsure in vivo. This chain is Cysteine desulfurase, found in Cronobacter sakazakii (strain ATCC BAA-894) (Enterobacter sakazakii).